Here is a 1298-residue protein sequence, read N- to C-terminus: Phosphoribosylformylglycinamidine synthase (1298 aa).

Positions 303–327 (FPGAATGSGGEIRDEGATGRGAKPK) are disordered. Residues 305–316 (GAATGSGGEIRD), 384–386 (TGY), and Ala676 contribute to the ATP site. Positions 677, 716, 720, and 884 each coordinate Mg(2+). Ser886 serves as a coordination point for ATP. Residues 1045 to 1298 (VAVLREQGVN…MFRNARAWVN (254 aa)) enclose the Glutamine amidotransferase type-1 domain. Cys1138 (nucleophile) is an active-site residue. Residues His1263 and Glu1265 contribute to the active site.

This sequence in the N-terminal section; belongs to the FGAMS family. As to quaternary structure, monomer.

It localises to the cytoplasm. The catalysed reaction is N(2)-formyl-N(1)-(5-phospho-beta-D-ribosyl)glycinamide + L-glutamine + ATP + H2O = 2-formamido-N(1)-(5-O-phospho-beta-D-ribosyl)acetamidine + L-glutamate + ADP + phosphate + H(+). Its pathway is purine metabolism; IMP biosynthesis via de novo pathway; 5-amino-1-(5-phospho-D-ribosyl)imidazole from N(2)-formyl-N(1)-(5-phospho-D-ribosyl)glycinamide: step 1/2. Its function is as follows. Phosphoribosylformylglycinamidine synthase involved in the purines biosynthetic pathway. Catalyzes the ATP-dependent conversion of formylglycinamide ribonucleotide (FGAR) and glutamine to yield formylglycinamidine ribonucleotide (FGAM) and glutamate. In Pseudomonas syringae pv. tomato (strain ATCC BAA-871 / DC3000), this protein is Phosphoribosylformylglycinamidine synthase.